Here is a 471-residue protein sequence, read N- to C-terminus: Cysteine--tRNA ligase (471 aa).

C29 is a binding site for Zn(2+). The 'HIGH' region motif lies at 31 to 41 (PTVYNYIHIGN). Zn(2+) is bound by residues C209, H234, and E238. The short motif at 266–270 (KMSKS) is the 'KMSKS' region element. An ATP-binding site is contributed by K269.

The protein belongs to the class-I aminoacyl-tRNA synthetase family. As to quaternary structure, monomer. Zn(2+) is required as a cofactor.

It is found in the cytoplasm. It carries out the reaction tRNA(Cys) + L-cysteine + ATP = L-cysteinyl-tRNA(Cys) + AMP + diphosphate. The sequence is that of Cysteine--tRNA ligase from Listeria innocua serovar 6a (strain ATCC BAA-680 / CLIP 11262).